The sequence spans 322 residues: Coelomocyte uptake defective protein 15 (322 aa).

The first 20 residues, 1–20, serve as a signal peptide directing secretion; sequence MVNSLSRILFCSLLIFSVIS. 7 N-linked (GlcNAc...) asparagine glycosylation sites follow: Asn-62, Asn-98, Asn-144, Asn-170, Asn-180, Asn-183, and Asn-222. The helical transmembrane segment at 244 to 264 threads the bilayer; that stretch reads LFGIMITFGTLLLLTALFYAA.

The protein belongs to the OSTM1 family.

The protein resides in the membrane. Its function is as follows. Modulates the transport of substances from the endosomal to lysosomal compartments. Plays a role in lysosome formation and function in coelomocytes. In Caenorhabditis elegans, this protein is Coelomocyte uptake defective protein 15.